A 380-amino-acid polypeptide reads, in one-letter code: Chaperone protein DnaJ (380 aa).

One can recognise a J domain in the interval 5-70 (DYYEVLGVSK…QKRQTYDQYG (66 aa)). The segment at 136–214 (GKEVEIKIPT…CHGQGRVEKT (79 aa)) adopts a CR-type zinc-finger fold. The Zn(2+) site is built by cysteine 149, cysteine 152, cysteine 166, cysteine 169, cysteine 188, cysteine 191, cysteine 202, and cysteine 205. CXXCXGXG motif repeat units lie at residues 149–156 (CDPCDGSG), 166–173 (CTTCHGAG), 188–195 (CPTCQGQG), and 202–209 (CDSCHGQG).

Belongs to the DnaJ family. In terms of assembly, homodimer. Zn(2+) serves as cofactor.

The protein localises to the cytoplasm. Its function is as follows. Participates actively in the response to hyperosmotic and heat shock by preventing the aggregation of stress-denatured proteins and by disaggregating proteins, also in an autonomous, DnaK-independent fashion. Unfolded proteins bind initially to DnaJ; upon interaction with the DnaJ-bound protein, DnaK hydrolyzes its bound ATP, resulting in the formation of a stable complex. GrpE releases ADP from DnaK; ATP binding to DnaK triggers the release of the substrate protein, thus completing the reaction cycle. Several rounds of ATP-dependent interactions between DnaJ, DnaK and GrpE are required for fully efficient folding. Also involved, together with DnaK and GrpE, in the DNA replication of plasmids through activation of initiation proteins. This is Chaperone protein DnaJ from Pseudoalteromonas translucida (strain TAC 125).